Consider the following 687-residue polypeptide: Bifunctional lysine-specific demethylase and histidyl-hydroxylase NO66 (687 aa).

Residues 1-174 form a disordered region; it reads MSDKNKKVSA…RSCPLPSKKN (174 aa). Basic and acidic residues predominate over residues 23–32; it reads DVQKGTKNSD. 2 stretches are compositionally biased toward low complexity: residues 33-50 and 58-74; these read KNGAAKNNNNRNLASKNG and KKNGSYSDGDNGSSSSS. Residues 75–96 are compositionally biased toward acidic residues; the sequence is GEDEEDDSTDSSDEYESSESGE. Polar residues-rich tracts occupy residues 100-116 and 136-156; these read LNSHSSQSSPETPANTR and RTSSTPVGQSTSAARSTQQPK. In terms of domain architecture, JmjC spans 347–483; sequence NPSSYLVQLR…NLMEKLMPLV (137 aa). Histidine 387, aspartate 389, and histidine 449 together coordinate Fe cation.

This sequence belongs to the ROX family. NO66 subfamily. Fe(2+) serves as cofactor.

The protein resides in the nucleus. The catalysed reaction is N(6),N(6)-dimethyl-L-lysyl(36)-[histone H3] + 2 2-oxoglutarate + 2 O2 = L-lysyl(36)-[histone H3] + 2 formaldehyde + 2 succinate + 2 CO2. Oxygenase that can act as both a histone lysine demethylase and a ribosomal histidine hydroxylase. Specifically demethylates 'Lys-4' (H3K4me) and 'Lys-36' (H3K36me) of histone H3, thereby playing a central role in histone code. The sequence is that of Bifunctional lysine-specific demethylase and histidyl-hydroxylase NO66 from Drosophila persimilis (Fruit fly).